A 501-amino-acid chain; its full sequence is MEAASTWALLLALLLLLLLLSLTLFRTPARGYLPPGPTPLPLLGNLLQLRPGALYSGLLRLSKKYGPVFTVYLGPWRRVVVLVGHDAVREALGGQAEEFSGRGTLATLDKTFDGHGVFFANGERWKQLRKFTLLALRDLGMGKREGEELIQAEVQSLVEAFQKTEGRPFNPSMLLAQATSNVVCSLVFGIRLPYDDKEFQAVIQAASGTLLGISSPWGQAYEMFSWLLQPLPGPHTQLQHHLGTLAAFTIQQVQKHQGRFQTSGPARDVVDAFLLKMAQEKQDPGTEFTEKNLLMTVTYLLFAGTMTIGATIRYALLLLLRYPQVQQRVREELIQELGPGRAPSLSDRVRLPYTDAVLHEAQRLLALVPMGMPHTITRTTCFRGYTLPKGTEVFPLIGSILHDPAVFQNPGEFHPGRFLDEDGRLRKHEAFLPYSLGKRVCLGEGLARAELWLFFTSILQAFSLETPCPPGDLSLKPAISGLFNIPPDFQLRVWPTGDQSR.

Cys441 contributes to the heme binding site.

Belongs to the cytochrome P450 family. It depends on heme as a cofactor.

Its subcellular location is the endoplasmic reticulum membrane. The protein localises to the microsome membrane. It catalyses the reaction all-trans-retinoate + reduced [NADPH--hemoprotein reductase] + O2 = all-trans-5,6-epoxyretinoate + oxidized [NADPH--hemoprotein reductase] + H2O + H(+). The enzyme catalyses all-trans-retinoate + reduced [NADPH--hemoprotein reductase] + O2 = all-trans-4-hydroxyretinoate + oxidized [NADPH--hemoprotein reductase] + H2O + H(+). It carries out the reaction (5S)-hydroperoxy-(6E,8Z,11Z,14Z)-eicosatetraenoate = 5-oxo-(6E,8Z,11Z,14Z)-eicosatetraenoate + H2O. The catalysed reaction is (12S)-hydroperoxy-(5Z,8Z,10E,14Z)-eicosatetraenoate = 12-oxo-(5Z,8Z,10E,14Z)-eicosatetraenoate + H2O. It catalyses the reaction (15S)-hydroperoxy-(5Z,8Z,11Z,13E)-eicosatetraenoate = 15-oxo-(5Z,8Z,11Z,13E)-eicosatetraenoate + H2O. The enzyme catalyses prostaglandin H2 = thromboxane A2. It carries out the reaction prostaglandin H2 = (12S)-hydroxy-(5Z,8E,10E)-heptadecatrienoate + malonaldehyde. The catalysed reaction is (13S)-hydroperoxy-(9Z,11E)-octadecadienoate = 13-oxo-(9Z,11E)-octadecadienoate + H2O. The protein operates within lipid metabolism; fatty acid metabolism. A cytochrome P450 monooxygenase involved in the metabolism of retinoids and eicosanoids. In epidermis, may contribute to the oxidative metabolism of all-trans-retinoic acid. For this activity, uses molecular oxygen inserting one oxygen atom into a substrate, and reducing the second into a water molecule, with two electrons provided by NADPH via cytochrome P450 reductase (NADPH--hemoprotein reductase). Additionally, displays peroxidase and isomerase activities toward various oxygenated eicosanoids such as prostaglandin H2 (PGH2) and hydroperoxyeicosatetraenoates (HPETEs). Independently of cytochrome P450 reductase, NADPH, and O2, catalyzes the breakdown of PGH2 to hydroxyheptadecatrienoic acid (HHT) and malondialdehyde (MDA), which is known to act as a mediator of DNA damage. This chain is Cytochrome P450 2S1 (Cyp2s1), found in Mus musculus (Mouse).